The chain runs to 278 residues: Ribonuclease HII (278 aa).

Residues 71–259 (WPVAGCDEAG…VAAAWDKHAP (189 aa)) form the RNase H type-2 domain. Positions 77, 78, and 168 each coordinate a divalent metal cation.

This sequence belongs to the RNase HII family. Requires Mn(2+) as cofactor. The cofactor is Mg(2+).

The protein localises to the cytoplasm. The catalysed reaction is Endonucleolytic cleavage to 5'-phosphomonoester.. Endonuclease that specifically degrades the RNA of RNA-DNA hybrids. This is Ribonuclease HII from Rhodopseudomonas palustris (strain BisA53).